The chain runs to 312 residues: Ribonuclease Z (312 aa).

Residues histidine 63, histidine 65, aspartate 67, histidine 68, histidine 141, aspartate 212, and histidine 270 each coordinate Zn(2+). The Proton acceptor role is filled by aspartate 67.

It belongs to the RNase Z family. Homodimer. The cofactor is Zn(2+).

The enzyme catalyses Endonucleolytic cleavage of RNA, removing extra 3' nucleotides from tRNA precursor, generating 3' termini of tRNAs. A 3'-hydroxy group is left at the tRNA terminus and a 5'-phosphoryl group is left at the trailer molecule.. Functionally, zinc phosphodiesterase, which displays some tRNA 3'-processing endonuclease activity. Probably involved in tRNA maturation, by removing a 3'-trailer from precursor tRNA. This chain is Ribonuclease Z, found in Latilactobacillus sakei subsp. sakei (strain 23K) (Lactobacillus sakei subsp. sakei).